The following is a 122-amino-acid chain: Mating-type protein A1 (122 aa).

The homeobox DNA-binding region spans 62-121 (NHKRGCNIDKKTKDMLNKVYEQKQYLTKEEREFVAKKCNLTPLQVRVWFANKRIRNKNTK).

It belongs to the MATA1 family. Forms a heterodimer with ALPHA2.

The protein resides in the nucleus. Mating type proteins are sequence specific DNA-binding proteins that act as master switches in yeast differentiation by controlling gene expression in a cell type-specific fashion. Transcriptional corepressor that acts in conjunction with ALPHA2 to repress transcription of haploid-specific genes and of MATALPHA1. This Nakaseomyces delphensis (Yeast) protein is Mating-type protein A1 (MATA1).